The chain runs to 256 residues: Catechol O-methyltransferase A (256 aa).

Positions 1-27 are cleaved as a signal peptide; that stretch reads MLWVVLAVVVVLASVLVLLRQSSGLLA. Asn58 carries an N-linked (GlcNAc...) asparagine glycan. Val84, Ser114, Glu132, and Asp183 together coordinate S-adenosyl-L-methionine. Mg(2+) is bound at residue Asp183. Lys186 is a binding site for substrate. Mg(2+) is bound by residues Asp211 and Asn212. Substrate-binding residues include Asn212 and Glu241.

The protein belongs to the class I-like SAM-binding methyltransferase superfamily. Cation-dependent O-methyltransferase family. Mg(2+) is required as a cofactor. As to expression, widely expressed. Has higher expression in females compared to males. Strongly expressed in liver and diencephalon. Expressed at lower levels in hindbrain, spinal cord, eye, telencephalon, spleen, gut, gill and muscle. Detected in ovary and testis. In eye, detected in all layers of the retina with highest expression in the inner nuclear layer. In gut, expressed in the lamina propria but has little or no expression in gut epithelium. In brain, has strongest expression near the midline of the telencephalon, in the periventricular gray zone of the optic tectum, in the preglomerular nucleus, and near the walls of the diencephalic ventricle.

The protein resides in the secreted. The enzyme catalyses a catechol + S-adenosyl-L-methionine = a guaiacol + S-adenosyl-L-homocysteine + H(+). Catalyzes the O-methylation, and thereby the inactivation, of catecholamine neurotransmitters and catechol hormones. Shows highest activity towards catecholestrogens and dobutamine. Also has lower activity towards L-DOPA, dopamine and epinephrine. Active towards the xenobiotic compounds methyl-DOPA, carbidopa, isoproterenol, and apomorphine. This Danio rerio (Zebrafish) protein is Catechol O-methyltransferase A.